Reading from the N-terminus, the 362-residue chain is Probable dual-specificity RNA methyltransferase RlmN (362 aa).

Glu105 functions as the Proton acceptor in the catalytic mechanism. The Radical SAM core domain maps to 111-344 (HNYGNSVCVT…VTIRREQGHD (234 aa)). Cys118 and Cys349 are oxidised to a cystine. Positions 125, 129, and 132 each coordinate [4Fe-4S] cluster. S-adenosyl-L-methionine is bound by residues 175–176 (GE), Ser207, 230–232 (SLH), and Asn306. The S-methylcysteine intermediate role is filled by Cys349.

Belongs to the radical SAM superfamily. RlmN family. The cofactor is [4Fe-4S] cluster.

The protein resides in the cytoplasm. The catalysed reaction is adenosine(2503) in 23S rRNA + 2 reduced [2Fe-2S]-[ferredoxin] + 2 S-adenosyl-L-methionine = 2-methyladenosine(2503) in 23S rRNA + 5'-deoxyadenosine + L-methionine + 2 oxidized [2Fe-2S]-[ferredoxin] + S-adenosyl-L-homocysteine. It carries out the reaction adenosine(37) in tRNA + 2 reduced [2Fe-2S]-[ferredoxin] + 2 S-adenosyl-L-methionine = 2-methyladenosine(37) in tRNA + 5'-deoxyadenosine + L-methionine + 2 oxidized [2Fe-2S]-[ferredoxin] + S-adenosyl-L-homocysteine. In terms of biological role, specifically methylates position 2 of adenine 2503 in 23S rRNA and position 2 of adenine 37 in tRNAs. The polypeptide is Probable dual-specificity RNA methyltransferase RlmN (Halalkalibacterium halodurans (strain ATCC BAA-125 / DSM 18197 / FERM 7344 / JCM 9153 / C-125) (Bacillus halodurans)).